The primary structure comprises 332 residues: Trace amine-associated receptor 1 (332 aa).

At 1-23 (MHLCHAITNISHRNSDWSREVQA) the chain is on the extracellular side. Residue Asn-9 is glycosylated (N-linked (GlcNAc...) asparagine). Residues 24–48 (SLYSLMSLIILATLVGNLIVIISIS) form a helical membrane-spanning segment. The Cytoplasmic portion of the chain corresponds to 49–58 (HFKQLHTPTN). Residues 59–80 (WLLHSMAIVDFLLGCLIMPCSM) form a helical membrane-spanning segment. The Extracellular portion of the chain corresponds to 81-95 (VRTVERCWYFGEILC). Residues Cys-95 and Cys-181 are joined by a disulfide bond. Residues 96-118 (KVHTSTDIMLSSASIFHLAFISI) form a helical membrane-spanning segment. Residue Asp-102 coordinates 2-phenylethylamine. At 119–138 (DRYCAVCDPLRYKAKINIST) the chain is on the cytoplasmic side. A helical membrane pass occupies residues 139-160 (ILVMILVSWSLPAVYAFGMIFL). Residues 161-187 (ELNLKGVEELYRSQVSDLGGCSPFFSK) are Extracellular-facing. The tract at residues 174-185 (QVSDLGGCSPFF) is extracellular Loop 2 (ECL2). A helical membrane pass occupies residues 188 to 210 (VSGVLAFMTSFYIPGSVMLFVYY). At 211-246 (RIYFIAKGQARSINRTNVQVGLEGKSQAPQSKETKA) the chain is on the cytoplasmic side. Residues 247–270 (AKTLGIMVGVFLVCWCPFFLCTVL) form a helical membrane-spanning segment. At 271-283 (DPFLGYVIPPSLN) the chain is on the extracellular side. A helical membrane pass occupies residues 284–304 (DALYWFGYLNSALNPMVYAFF). Topologically, residues 305-332 (YPWFRRALKMVLLGKIFQKDSSRSKLFL) are cytoplasmic.

The protein belongs to the G-protein coupled receptor 1 family. As to expression, widely distributed throughout the brain. Strongly expressed in the mitral cell layer of the olfactory bulb, piriform cortex, the arcuate, motor, and mesencephalic trigeminal nuclei, lateral reticular and hypoglossal nuclei, cerebellar Purkinje cells, and ventral horn of the spinal cord. Moderately expressed in the frontal, entorhinal, and agranular cortices, the ventral pallidum, thalamus, hippocampus, several hypothalamic nuclei, ambiguus, dorsal raphe, and gigantocellular reticular nuclei. Weakly expressed in the septum, basal ganglia, amygdala, myelencephalon, and spinal cord dorsal horn. Particularly interesting is the moderate expression in several monoaminergic cell groups, namely the dorsal raphe, the locus coeruleus, and the ventral tegmental area.

Its subcellular location is the endomembrane system. The protein localises to the endoplasmic reticulum membrane. The protein resides in the cell membrane. Its activity is regulated as follows. Activated by SEP-363856 small molecule: IHCH-7179 acts both as an agonist activator for HTR1A and TAAR1. Functionally, intracellular G-protein coupled receptor for trace amines, which recognizes endogenous amine-containing metabolites such as beta-phenylethylamine (beta-PEA), 3-iodothyronamine (T1AM), isoamylamine (IAA), cadaverine (CAD), cyclohexylamine (CHA), p-tyramine (p-TYR), trimethylamine (TMA), octopamine and tryptamine. Also functions as a receptor for various drugs and psychoactive substances, such as amphetamine and methamphetamine. Unresponsive to classical biogenic amines, such as epinephrine and histamine and only partially activated by dopamine and serotonin. Expressed in both the central and peripheral nervous system: TAAR1 activation regulates the activity of several neurotransmitter signaling pathways by (1) decreasing the basal firing rates of the neurons involved and by (2) lowering the sensitivity of receptors to neurotransmitters. Ligand binding causes a conformation change that triggers signaling via guanine nucleotide-binding proteins (G proteins) and modulates the activity of downstream effectors. TAAR1 is coupled with different G(i)/G(o)-, G(s)- or G(q)/G(11) classes of G alpha proteins depending on the ligand. CAD-binding is coupled to G(i)/G(o) G alpha proteins and mediates inhibition of adenylate cyclase activity. T1AM- or beta-PEA-binding is coupled to G(s) G alpha proteins and mediates activation of adenylate cyclase activity. CHA- or IAA-binding is coupled to G(q)/G(11) G alpha proteins and activates phospholipase C-beta, releasing diacylglycerol (DAG) and inositol 1,4,5-trisphosphate (IP3) second messengers. TMA-binding is coupled with all three G(i)/G(o)-, G(s)- or G(q)/G(11) G alpha protein subtypes. This is Trace amine-associated receptor 1 from Mus musculus (Mouse).